Here is a 250-residue protein sequence, read N- to C-terminus: Small ribosomal subunit protein uS2 (250 aa).

It belongs to the universal ribosomal protein uS2 family.

This chain is Small ribosomal subunit protein uS2, found in Variovorax paradoxus (strain S110).